Consider the following 730-residue polypeptide: Elongation factor 2 (730 aa).

In terms of domain architecture, tr-type G spans 19-260 (DRIRNIGIVA…MVVKHLPNPL (242 aa)). GTP-binding positions include 28–35 (AHIDHGKT), 94–98 (DTPGH), and 148–151 (NKVD). The residue at position 597 (His597) is a Diphthamide.

It belongs to the TRAFAC class translation factor GTPase superfamily. Classic translation factor GTPase family. EF-G/EF-2 subfamily.

The protein resides in the cytoplasm. In terms of biological role, catalyzes the GTP-dependent ribosomal translocation step during translation elongation. During this step, the ribosome changes from the pre-translocational (PRE) to the post-translocational (POST) state as the newly formed A-site-bound peptidyl-tRNA and P-site-bound deacylated tRNA move to the P and E sites, respectively. Catalyzes the coordinated movement of the two tRNA molecules, the mRNA and conformational changes in the ribosome. This chain is Elongation factor 2, found in Methanoculleus marisnigri (strain ATCC 35101 / DSM 1498 / JR1).